The primary structure comprises 484 residues: tRNA-2-methylthio-N(6)-dimethylallyladenosine synthase (484 aa).

Positions 29-149 constitute an MTTase N-terminal domain; it reads GVFHIHTLGC…LPKLLDQNRA (121 aa). 6 residues coordinate [4Fe-4S] cluster: Cys-38, Cys-78, Cys-112, Cys-186, Cys-190, and Cys-193. Positions 172–401 constitute a Radical SAM core domain; the sequence is RASRISSWVA…VALQEQITEE (230 aa). The TRAM domain occupies 404 to 474; sequence ATFEGRDVEV…RHNLLADPDV (71 aa).

Belongs to the methylthiotransferase family. MiaB subfamily. In terms of assembly, monomer. The cofactor is [4Fe-4S] cluster.

It is found in the cytoplasm. It catalyses the reaction N(6)-dimethylallyladenosine(37) in tRNA + (sulfur carrier)-SH + AH2 + 2 S-adenosyl-L-methionine = 2-methylsulfanyl-N(6)-dimethylallyladenosine(37) in tRNA + (sulfur carrier)-H + 5'-deoxyadenosine + L-methionine + A + S-adenosyl-L-homocysteine + 2 H(+). Its function is as follows. Catalyzes the methylthiolation of N6-(dimethylallyl)adenosine (i(6)A), leading to the formation of 2-methylthio-N6-(dimethylallyl)adenosine (ms(2)i(6)A) at position 37 in tRNAs that read codons beginning with uridine. This is tRNA-2-methylthio-N(6)-dimethylallyladenosine synthase from Bifidobacterium longum (strain DJO10A).